The primary structure comprises 1011 residues: Vacuolar membrane protease (1011 aa).

The Cytoplasmic portion of the chain corresponds to 1–14 (MKLTKAVFRFRRTN). Residues 15-35 (LSTLLVITYLVITTLYVWDHF) form a helical membrane-spanning segment. Over 36–352 (RYHFTLPSDY…WFVVWSARSL (317 aa)) the chain is Vacuolar. The Zn(2+) site is built by His149, Asp161, Glu194, Glu219, and His293. The helical transmembrane segment at 353-373 (FYWNCIILALFPSILAILFLV) threads the bilayer. Residues 374–390 (AYDMQLLKFNFWDAMLR) lie on the Cytoplasmic side of the membrane. Residues 391–411 (LPVSVCLAYFCVKLFQVLVGQ) traverse the membrane as a helical segment. The Vacuolar portion of the chain corresponds to 412–420 (LNPYVFSRD). The helical transmembrane segment at 421 to 441 (YVSPILAEASMFIFMNYVILS) threads the bilayer. At 442–451 (SWERLRPLRD) the chain is on the cytoplasmic side. The chain crosses the membrane as a helical span at residues 452 to 472 (FKTVALVEVSMVLWIYLISVT). Topologically, residues 473–487 (RWLRDSDYTATGLYP) are vacuolar. The chain crosses the membrane as a helical span at residues 488 to 508 (FTIGYTFVSIGAIIGVFCATF). Residues 509-647 (KAKLNPEDDS…SILNYDWSIQ (139 aa)) lie on the Cytoplasmic side of the membrane. The segment at 534–585 (MQHQYQQHSQKHSNQHSPHHSTHHSAQHSVHHSPRQSIHQVPSSEQRQRDAS) is disordered. Residues 542 to 567 (SQKHSNQHSPHHSTHHSAQHSVHHSP) show a composition bias toward basic residues. Polar residues predominate over residues 568-578 (RQSIHQVPSSE). A helical membrane pass occupies residues 648–668 (FMVVTPWVTYFTWICLDLIMG). The Vacuolar portion of the chain corresponds to 669–681 (AMNQTIQESAKGT). N-linked (GlcNAc...) asparagine glycosylation occurs at Asn671. The helical transmembrane segment at 682–702 (TFVTHMALIGSLLLSLPMLPF) threads the bilayer. Over 703–708 (TYKLHS) the chain is Cytoplasmic. The helical transmembrane segment at 709–729 (FAGMLFLLLAVTTAVWTIVAP) threads the bilayer. Residues 730 to 1011 (PFTESSPLKL…MVSVTKYVEL (282 aa)) are Vacuolar-facing. 3 N-linked (GlcNAc...) asparagine glycosylation sites follow: Asn751, Asn825, and Asn854.

This sequence belongs to the peptidase M28 family. Requires Zn(2+) as cofactor.

It is found in the vacuole membrane. Its function is as follows. May be involved in vacuolar sorting and osmoregulation. This chain is Vacuolar membrane protease, found in Eremothecium gossypii (strain ATCC 10895 / CBS 109.51 / FGSC 9923 / NRRL Y-1056) (Yeast).